The primary structure comprises 443 residues: Thymidine phosphorylase (443 aa).

This sequence belongs to the thymidine/pyrimidine-nucleoside phosphorylase family. In terms of assembly, homodimer.

It carries out the reaction thymidine + phosphate = 2-deoxy-alpha-D-ribose 1-phosphate + thymine. It participates in pyrimidine metabolism; dTMP biosynthesis via salvage pathway; dTMP from thymine: step 1/2. Its function is as follows. The enzymes which catalyze the reversible phosphorolysis of pyrimidine nucleosides are involved in the degradation of these compounds and in their utilization as carbon and energy sources, or in the rescue of pyrimidine bases for nucleotide synthesis. The chain is Thymidine phosphorylase from Aliivibrio salmonicida (strain LFI1238) (Vibrio salmonicida (strain LFI1238)).